A 310-amino-acid chain; its full sequence is Protein-methionine-sulfoxide reductase catalytic subunit MsrP (310 aa).

The segment at residues 1-45 is a signal peptide (tat-type signal); that stretch reads MRKTSSPRIAPSEITPRDLYHDRRRFMQAAAGAAAAALWPHWLSA. Mo-molybdopterin is bound by residues Asn-73, 76-77, Cys-131, Thr-166, Asn-214, Arg-219, and 230-232; these read YE and SAK.

This sequence belongs to the MsrP family. Heterodimer of a catalytic subunit (MsrP) and a heme-binding subunit (MsrQ). Requires Mo-molybdopterin as cofactor. Predicted to be exported by the Tat system. The position of the signal peptide cleavage has not been experimentally proven.

It is found in the periplasm. It carries out the reaction L-methionyl-[protein] + a quinone + H2O = L-methionyl-(S)-S-oxide-[protein] + a quinol. The catalysed reaction is L-methionyl-[protein] + a quinone + H2O = L-methionyl-(R)-S-oxide-[protein] + a quinol. In terms of biological role, part of the MsrPQ system that repairs oxidized periplasmic proteins containing methionine sulfoxide residues (Met-O), using respiratory chain electrons. Thus protects these proteins from oxidative-stress damage caused by reactive species of oxygen and chlorine generated by the host defense mechanisms. MsrPQ is essential for the maintenance of envelope integrity under bleach stress, rescuing a wide series of structurally unrelated periplasmic proteins from methionine oxidation. The catalytic subunit MsrP is non-stereospecific, being able to reduce both (R-) and (S-) diastereoisomers of methionine sulfoxide. In Methylococcus capsulatus (strain ATCC 33009 / NCIMB 11132 / Bath), this protein is Protein-methionine-sulfoxide reductase catalytic subunit MsrP.